A 196-amino-acid chain; its full sequence is Pyridoxine/pyridoxamine 5'-phosphate oxidase (196 aa).

Residues 46–51 (RNVLYK), 61–62 (FT), R67, K68, and Q90 each bind FMN. Residue K51 coordinates substrate. Substrate is bound by residues Y108, R112, and S116. FMN contacts are provided by residues 125 to 126 (QS) and W169. Residue 175–177 (RLH) coordinates substrate. Position 179 (R179) interacts with FMN.

The protein belongs to the pyridoxamine 5'-phosphate oxidase family. Homodimer. It depends on FMN as a cofactor.

It catalyses the reaction pyridoxamine 5'-phosphate + O2 + H2O = pyridoxal 5'-phosphate + H2O2 + NH4(+). The enzyme catalyses pyridoxine 5'-phosphate + O2 = pyridoxal 5'-phosphate + H2O2. The protein operates within cofactor metabolism; pyridoxal 5'-phosphate salvage; pyridoxal 5'-phosphate from pyridoxamine 5'-phosphate: step 1/1. Its pathway is cofactor metabolism; pyridoxal 5'-phosphate salvage; pyridoxal 5'-phosphate from pyridoxine 5'-phosphate: step 1/1. Its function is as follows. Catalyzes the oxidation of either pyridoxine 5'-phosphate (PNP) or pyridoxamine 5'-phosphate (PMP) into pyridoxal 5'-phosphate (PLP). The chain is Pyridoxine/pyridoxamine 5'-phosphate oxidase from Coxiella burnetii (strain RSA 493 / Nine Mile phase I).